The chain runs to 444 residues: MAGKDWEIVQEKAFTAWVNSVLDKRGEKISDVGKDLSDGVKLIFFLELISSKKFNKKYDFEPKARINMIQNVALALKFLDEELKIKVQGIGSEDFVDNNKKMILGFLWTLYRKYRIAVISEGDKSSEEGLLLWCKNTTTGYDGVNITSFTKSFRDGLAFLALSHKFEPESFKFQEFEAMDPIARLNAAFDFAEKGLGVPKLLEAEEVMRGTTDERSLVLYTSLFFHAYRAKEEKARLESSKNEMANRLAGLENSLESEKVSREQLIKQKDQLNSLLASLESEGAEREKRLRELEAKLDETLKNLELEKLARMELEARLAKTEKDRAILELKLAEAIDEKSKLEQQIEATRIRGAAEAQGLGLLRKNLDTHVHDLLKWQKLTMENSSSSSIDDQIIVEVSGLPFGEQVKHLATKLEAENLAIMKLLNQKEDDLKAQKLKSSKSKK.

An actin-binding region spans residues Met-1 to Ala-227. Calponin-homology (CH) domains are found at residues Ile-8–Arg-115 and Lys-124–Arg-229. Coiled coils occupy residues Ala-227–Arg-352 and Leu-410–Ala-434.

This sequence belongs to the cortexillin family. As to quaternary structure, homodimer; parallel.

It is found in the cytoplasm. The protein localises to the cytoskeleton. Functionally, actin-bundling protein. When linked to F-actin the actin filaments form preferentially anti-parallel bundles that associate into meshworks. Plays a major role in cytokinesis. Negatively regulates cortical localization of rapgap1. The polypeptide is Cortexillin-1 (ctxA) (Dictyostelium discoideum (Social amoeba)).